Here is a 201-residue protein sequence, read N- to C-terminus: IMP cyclohydrolase (201 aa).

It belongs to the archaeal IMP cyclohydrolase family.

The enzyme catalyses IMP + H2O = 5-formamido-1-(5-phospho-D-ribosyl)imidazole-4-carboxamide. Its pathway is purine metabolism; IMP biosynthesis via de novo pathway; IMP from 5-formamido-1-(5-phospho-D-ribosyl)imidazole-4-carboxamide: step 1/1. Its function is as follows. Catalyzes the cyclization of 5-formylamidoimidazole-4-carboxamide ribonucleotide to IMP. This is IMP cyclohydrolase from Methanococcus maripaludis (strain DSM 14266 / JCM 13030 / NBRC 101832 / S2 / LL).